Consider the following 1553-residue polypeptide: ABC-type transporter cctS (1553 aa).

Helical transmembrane passes span 27 to 47, 90 to 110, 114 to 134, and 151 to 171; these read LIPL…YFHA, LEVA…IFSG, DLTS…ILFV, and SVLY…AILG. Asn176 carries an N-linked (GlcNAc...) asparagine glycan. A run of 5 helical transmembrane segments spans residues 177–197, 286–306, 324–344, 413–433, and 438–458; these read FTIA…FHWT, LLWQ…PPVL, TAWL…VAGC, GYLY…TYLL, and GISG…NILI. The 290-residue stretch at 293-582 folds into the ABC transmembrane type-1 1 domain; that stretch reads ATLNSFAVFV…IADAITFLLR (290 aa). Asn524 carries an N-linked (GlcNAc...) asparagine glycan. A run of 2 helical transmembrane segments spans residues 527–547 and 550–570; these read TFFS…TVVW and SMGT…RIPF. N-linked (GlcNAc...) asparagine glycosylation is present at Asn617. Positions 635 to 874 constitute an ABC transporter 1 domain; it reads NKRSDIQLTE…GRIDADIMQN (240 aa). 670 to 677 contributes to the ATP binding site; it reads GPSGSGKS. N-linked (GlcNAc...) asparagine glycosylation is present at Asn725. The helical transmembrane segment at 948–970 threads the bilayer; sequence WYWVLVLFMFGIQQFISLATNIW. The ABC transmembrane type-1 2 domain maps to 951–1255; it reads VLVLFMFGIQ…FVQLYAIVQQ (305 aa). N-linked (GlcNAc...) asparagine glycosylation occurs at Asn992. Residues 1017-1037 traverse the membrane as a helical segment; it reads IYVAICLAYAFFTFARDLIVF. A glycan (N-linked (GlcNAc...) asparagine) is linked at Asn1085. 4 consecutive transmembrane segments (helical) span residues 1086–1108, 1113–1135, 1204–1224, and 1229–1249; these read ISTF…VFIS, AFLI…FING, FLGS…LESV, and AALV…FVQL. Positions 1294–1533 constitute an ABC transporter 2 domain; the sequence is VRFDAYTTRY…DDDGIFRRLC (240 aa). Residue 1328–1335 participates in ATP binding; sequence GRTGAGKS.

Belongs to the ABC transporter superfamily.

The protein resides in the membrane. It participates in mycotoxin biosynthesis. Its function is as follows. ABC-type transporter; part of the gene cluster that mediates the biosynthesis of the mycotoxin cyclochlorotine, a hepatotoxic and carcinogenic cyclic chlorinated pentapeptide. CctS is essential for the biosynthesis of cyclochlorotine, maybe as a chloride channel that supplies chloride for chlorination by cctP2. The sequence is that of ABC-type transporter cctS from Talaromyces islandicus (Penicillium islandicum).